The chain runs to 471 residues: Alpha-galactosidase (471 aa).

Residues 1–18 form the signal peptide; the sequence is MFLLYLFTSFAAVSGVLG. A disulfide bridge connects residues Cys-42 and Cys-74. Asp-72 and Asp-73 together coordinate substrate. Asn-82 carries an N-linked (GlcNAc...) asparagine glycan. A disulfide bond links Cys-121 and Cys-151. Lys-147 provides a ligand contact to substrate. The Nucleophile role is filled by Asp-149. Residue Asn-175 is glycosylated (N-linked (GlcNAc...) asparagine). Arg-205 serves as a coordination point for substrate. Asp-209 serves as the catalytic Proton donor. Cystine bridges form between Cys-221–Cys-237 and Cys-223–Cys-230. A substrate-binding site is contributed by Gln-251. Asn-270, Asn-403, Asn-412, Asn-417, Asn-422, Asn-435, and Asn-454 each carry an N-linked (GlcNAc...) asparagine glycan.

It belongs to the glycosyl hydrolase 27 family. Homotetramer.

It is found in the secreted. It carries out the reaction Hydrolysis of terminal, non-reducing alpha-D-galactose residues in alpha-D-galactosides, including galactose oligosaccharides, galactomannans and galactolipids.. In Saccharomyces pastorianus (strain ATCC 76529 / Carlsberg bottom yeast no.1 / CBS 1513 / CLIB 176 / NBRC 1167 / NCYC 396 / NRRL Y-12693) (Saaz-type lager yeast), this protein is Alpha-galactosidase (MEL).